We begin with the raw amino-acid sequence, 1697 residues long: Histone acetyltransferase HAC1 (1697 aa).

Positions 1 to 16 are enriched in polar residues; it reads MNVQAHMSGQVSNQGT. Disordered stretches follow at residues 1 to 45, 202 to 221, 385 to 439, 555 to 574, 583 to 631, and 843 to 901; these read MNVQ…LGPS, SNFGLGSGGNMSSMSSQRNT, SFQA…QQQR, HWQSQSQEHTQMSNSMSNER, RMSG…GNRD, and IGIA…GKPE. 2 stretches are compositionally biased toward low complexity: residues 17 to 28 and 202 to 217; these read MSQQNGNSQMQN and SNFGLGSGGNMSSMSS. The span at 385–398 shows a compositional bias: polar residues; sequence SFQAVSRTSSSLSH. The segment covering 399–439 has biased composition (low complexity); the sequence is QQQQFQQQPNRFQQQPNQFHQQQQQFLHQQQLKQQSQQQQR. Composition is skewed to polar residues over residues 556-571 and 584-628; these read WQSQSQEHTQMSNSMS and MSGT…NGNG. The segment at 629 to 709 adopts a TAZ-type 1 zinc-finger fold; it reads NRDPRFKNQQ…EPNCPVCIPV (81 aa). The span at 873–901 shows a compositional bias: basic and acidic residues; that stretch reads TKVEKEPESLKKENLAESTEHTSKSGKPE. The PHD-type zinc finger occupies 989–1066; that stretch reads HYFCIPCYNE…EYTCPYCFIA (78 aa). A CBP/p300-type HAT domain is found at 1081–1517; that stretch reads VLGAKDLPRT…VLYHLHNPTA (437 aa). Residues 1204 to 1206, 1223 to 1224, and tryptophan 1279 contribute to the acetyl-CoA site; these read LDS and RT. 2 consecutive ZZ-type zinc fingers follow at residues 1399 to 1462 and 1519 to 1572; these read HLQP…IMDI and AFVT…SLAD. Zn(2+) is bound by residues cysteine 1404, cysteine 1407, cysteine 1419, cysteine 1422, cysteine 1428, cysteine 1431, histidine 1444, histidine 1452, cysteine 1524, cysteine 1527, cysteine 1539, cysteine 1542, cysteine 1548, cysteine 1551, histidine 1560, and histidine 1562. The segment at 1579–1662 adopts a TAZ-type 2 zinc-finger fold; sequence EARQLRVLQL…ECHVPRCRDL (84 aa).

As to expression, rosette leaves, stems and flowers.

The protein localises to the nucleus. The enzyme catalyses L-lysyl-[protein] + acetyl-CoA = N(6)-acetyl-L-lysyl-[protein] + CoA + H(+). Its function is as follows. Acetyltransferase enzyme. Acetylates histones, giving a specific tag for transcriptional activation. The polypeptide is Histone acetyltransferase HAC1 (HAC1) (Arabidopsis thaliana (Mouse-ear cress)).